Here is a 126-residue protein sequence, read N- to C-terminus: Adenosine 5'-monophosphoramidase HINT1 (126 aa).

Alanine 2 is subject to N-acetylalanine. The HIT domain maps to 18–126; that stretch reads IFGKIIRKEI…GGRQMNWPPG (109 aa). N6-acetyllysine occurs at positions 21 and 30. Residue 43–44 coordinates AMP; sequence DI. A phosphoserine mark is found at serine 45 and serine 72. Residues asparagine 99, 105–107, and 112–114 contribute to the AMP site; these read GQS and HLH. The short motif at 110–114 is the Histidine triad motif element; that stretch reads HVHLH. The Tele-AMP-histidine intermediate role is filled by histidine 112.

The protein belongs to the HINT family. As to quaternary structure, homodimer. Interacts with CDK7. Interacts with RUVBL1 and RUVBL2 and is associated with the LEF1/TCF1-CTNNB1 complex and with a KAT5 histone acetyltransferase complex. Identified in a complex with MITF and CTNNB1. Interacts with CDC34 and RBX1, and is part of a SCF (SKP2-CUL1-F-box protein) E3 ubiquitin-protein ligase complex. Interacts with SUMO1, SUMO2 and RGS17. Interacts with the Ten-1 ICD form of TENM1. Interacts with CALM1; interaction increases in the presence of calcium ions. As to expression, widely expressed.

Its subcellular location is the cytoplasm. The protein localises to the nucleus. It carries out the reaction adenosine 5'-phosphoramidate + H2O = AMP + NH4(+). Exhibits adenosine 5'-monophosphoramidase activity, hydrolyzing purine nucleotide phosphoramidates with a single phosphate group such as adenosine 5'monophosphoramidate (AMP-NH2) to yield AMP and NH2. Hydrolyzes adenosine 5'monophosphomorpholidate (AMP-morpholidate) and guanosine 5'monophosphomorpholidate (GMP-morpholidate). Hydrolyzes lysyl-AMP (AMP-N-epsilon-(N-alpha-acetyl lysine methyl ester)) generated by lysine tRNA ligase, as well as Met-AMP, His-AMP and Asp-AMP, lysyl-GMP (GMP-N-epsilon-(N-alpha-acetyl lysine methyl ester)) and AMP-N-alanine methyl ester. Can also convert adenosine 5'-O-phosphorothioate and guanosine 5'-O-phosphorothioate to the corresponding nucleoside 5'-O-phosphates with concomitant release of hydrogen sulfide. In addition, functions as a scaffolding protein that modulates transcriptional activation by the LEF1/TCF1-CTNNB1 complex and by the complex formed with MITF and CTNNB1. Modulates p53/TP53 levels and p53/TP53-mediated apoptosis. Modulates proteasomal degradation of target proteins by the SCF (SKP2-CUL1-F-box protein) E3 ubiquitin-protein ligase complex. Also exhibits SUMO-specific isopeptidase activity, deconjugating SUMO1 from RANGAP1 and RGS17. In Bos taurus (Bovine), this protein is Adenosine 5'-monophosphoramidase HINT1 (HINT1).